A 129-amino-acid polypeptide reads, in one-letter code: Glycine cleavage system H protein (129 aa).

The Lipoyl-binding domain occupies 24 to 106; that stretch reads SYTVGITEHA…YGEGWFFRVM (83 aa). Residue Lys65 is modified to N6-lipoyllysine.

This sequence belongs to the GcvH family. The glycine cleavage system is composed of four proteins: P, T, L and H. (R)-lipoate serves as cofactor.

In terms of biological role, the glycine cleavage system catalyzes the degradation of glycine. The H protein shuttles the methylamine group of glycine from the P protein to the T protein. The chain is Glycine cleavage system H protein from Shewanella baltica (strain OS185).